Consider the following 259-residue polypeptide: Acyl-[acyl-carrier-protein]--UDP-N-acetylglucosamine O-acyltransferase (259 aa).

This sequence belongs to the transferase hexapeptide repeat family. LpxA subfamily. In terms of assembly, homotrimer.

It localises to the cytoplasm. It catalyses the reaction a (3R)-hydroxyacyl-[ACP] + UDP-N-acetyl-alpha-D-glucosamine = a UDP-3-O-[(3R)-3-hydroxyacyl]-N-acetyl-alpha-D-glucosamine + holo-[ACP]. It functions in the pathway glycolipid biosynthesis; lipid IV(A) biosynthesis; lipid IV(A) from (3R)-3-hydroxytetradecanoyl-[acyl-carrier-protein] and UDP-N-acetyl-alpha-D-glucosamine: step 1/6. In terms of biological role, involved in the biosynthesis of lipid A, a phosphorylated glycolipid that anchors the lipopolysaccharide to the outer membrane of the cell. This chain is Acyl-[acyl-carrier-protein]--UDP-N-acetylglucosamine O-acyltransferase, found in Nautilia profundicola (strain ATCC BAA-1463 / DSM 18972 / AmH).